The primary structure comprises 49 residues: Large ribosomal subunit protein bL33 (49 aa).

This sequence belongs to the bacterial ribosomal protein bL33 family.

In Clostridioides difficile (strain 630) (Peptoclostridium difficile), this protein is Large ribosomal subunit protein bL33.